The sequence spans 589 residues: Putative phospholipase B-like 2 (589 aa).

An N-terminal signal peptide occupies residues 1-41 (MVGQMYCYPGSHLARALTRALALALVLALLVGPFLSGLAGA). Residues Asn88 and Asn110 are each glycosylated (N-linked (GlcNAc...) asparagine). Cys142 and Cys152 are joined by a disulfide. Asn231, Asn436, and Asn465 each carry an N-linked (GlcNAc...) asparagine glycan. Cys492 and Cys495 are joined by a disulfide. Asn515 is a glycosylation site (N-linked (GlcNAc...) asparagine).

Belongs to the phospholipase B-like family. Interacts with IGF2R. In terms of processing, the p76 protein is synthesized as a 80 kDa precursor which is then processed into a N-terminal 32 kDa form and a C-terminal 45 kDa form. Glycosylated; contains mannose 6-phosphate sugars. As to expression, ubiquitously expressed, with highest levels in heart, brain and liver.

The protein localises to the lysosome lumen. Functionally, putative phospholipase. This is Putative phospholipase B-like 2 (PLBD2) from Homo sapiens (Human).